A 523-amino-acid polypeptide reads, in one-letter code: Sialate O-acetylesterase (523 aa).

Residues 1 to 23 (MVAPGLVLGLVLPLILWADRSAG) form the signal peptide. N-linked (GlcNAc...) asparagine glycans are attached at residues Asn-107, Asn-138, Asn-267, Asn-290, Asn-401, and Asn-422.

Widely expressed with high expression in the testis, prostate, and colon.

Its subcellular location is the lysosome. It is found in the cytoplasm. It catalyses the reaction N-acetyl-9-O-acetylneuraminate + H2O = N-acetylneuraminate + acetate + H(+). The catalysed reaction is an Ac-O-9-sialoglycoconjugate + H2O = a sialoglycoconjugate + acetate + H(+). Functionally, catalyzes the removal of O-acetyl ester groups from position 9 of the free diacetylated sialate N-acetyl-9-O-acetylneuraminate (Neu5,9Ac2) in the cytosol and of the diacetylated sialate residues of sialylglycoconjugates in the lysosomes. Together with the sialate-O-acetyltransferase they regulate the balance of acetylated sialoglycoconjugates, key players in various processes such as cell-cell interactions, host-pathogen recognition, and tumor antigenicity. This chain is Sialate O-acetylesterase (SIAE), found in Homo sapiens (Human).